A 307-amino-acid polypeptide reads, in one-letter code: UDP-3-O-acyl-N-acetylglucosamine deacetylase (307 aa).

Zn(2+) is bound by residues His80, His239, and Asp243. The active-site Proton donor is the His266.

It belongs to the LpxC family. Zn(2+) serves as cofactor.

The enzyme catalyses a UDP-3-O-[(3R)-3-hydroxyacyl]-N-acetyl-alpha-D-glucosamine + H2O = a UDP-3-O-[(3R)-3-hydroxyacyl]-alpha-D-glucosamine + acetate. It participates in glycolipid biosynthesis; lipid IV(A) biosynthesis; lipid IV(A) from (3R)-3-hydroxytetradecanoyl-[acyl-carrier-protein] and UDP-N-acetyl-alpha-D-glucosamine: step 2/6. Functionally, catalyzes the hydrolysis of UDP-3-O-myristoyl-N-acetylglucosamine to form UDP-3-O-myristoylglucosamine and acetate, the committed step in lipid A biosynthesis. The chain is UDP-3-O-acyl-N-acetylglucosamine deacetylase from Neisseria gonorrhoeae (strain ATCC 700825 / FA 1090).